The primary structure comprises 154 residues: Myoglobin (154 aa).

Residues 2-148 (VLSDAEWHLV…FRKDIAAKYK (147 aa)) enclose the Globin domain. Phosphoserine is present on Ser-4. His-65 is a binding site for nitrite. His-65 contributes to the O2 binding site. Phosphothreonine is present on Thr-68. His-94 lines the heme b pocket.

It belongs to the globin family. As to quaternary structure, monomeric.

The protein localises to the cytoplasm. The protein resides in the sarcoplasm. The enzyme catalyses Fe(III)-heme b-[protein] + nitric oxide + H2O = Fe(II)-heme b-[protein] + nitrite + 2 H(+). It carries out the reaction H2O2 + AH2 = A + 2 H2O. Functionally, monomeric heme protein which primary function is to store oxygen and facilitate its diffusion within muscle tissues. Reversibly binds oxygen through a pentacoordinated heme iron and enables its timely and efficient release as needed during periods of heightened demand. Depending on the oxidative conditions of tissues and cells, and in addition to its ability to bind oxygen, it also has a nitrite reductase activity whereby it regulates the production of bioactive nitric oxide. Under stress conditions, like hypoxia and anoxia, it also protects cells against reactive oxygen species thanks to its pseudoperoxidase activity. The polypeptide is Myoglobin (MB) (Balaenoptera acutorostrata (Common minke whale)).